The primary structure comprises 655 residues: Katanin p80 WD40 repeat-containing subunit B1 (655 aa).

6 WD repeats span residues 18-58 (AHGS…CIMS), 61-100 (GHTT…ILRT), 103-142 (GHKA…CVFR), 145-184 (GHTQ…MMAE), 187-226 (EHKG…LIGC), and 229-269 (GETI…DTVP). A disordered region spans residues 316-453 (VPAEMPISQP…PVPAPQSKPP (138 aa)). A compositionally biased stretch (basic and acidic residues) spans 358-374 (KESRAEIQNPEDYKEIF). The span at 415-426 (PATSNKNNTEQL) shows a compositional bias: polar residues.

This sequence belongs to the WD repeat KATNB1 family. As to quaternary structure, interacts with katna1. This interaction enhances the microtubule binding and severing activity of katna1 and also targets this activity to the centrosome.

It localises to the cytoplasm. The protein localises to the cytoskeleton. It is found in the microtubule organizing center. Its subcellular location is the centrosome. The protein resides in the spindle pole. It localises to the spindle. In terms of biological role, participates in a complex which severs microtubules in an ATP-dependent manner. May act to target the enzymatic subunit of this complex to sites of action such as the centrosome. Microtubule severing may promote rapid reorganization of cellular microtubule arrays and the release of microtubules from the centrosome following nucleation. This chain is Katanin p80 WD40 repeat-containing subunit B1 (katnb1), found in Xenopus tropicalis (Western clawed frog).